The following is a 125-amino-acid chain: Phosphoribosyl-AMP cyclohydrolase (125 aa).

D74 contacts Mg(2+). C75 contributes to the Zn(2+) binding site. 2 residues coordinate Mg(2+): D76 and D78. Positions 92 and 99 each coordinate Zn(2+).

Belongs to the PRA-CH family. In terms of assembly, homodimer. Mg(2+) is required as a cofactor. Requires Zn(2+) as cofactor.

It is found in the cytoplasm. The enzyme catalyses 1-(5-phospho-beta-D-ribosyl)-5'-AMP + H2O = 1-(5-phospho-beta-D-ribosyl)-5-[(5-phospho-beta-D-ribosylamino)methylideneamino]imidazole-4-carboxamide. The protein operates within amino-acid biosynthesis; L-histidine biosynthesis; L-histidine from 5-phospho-alpha-D-ribose 1-diphosphate: step 3/9. Its function is as follows. Catalyzes the hydrolysis of the adenine ring of phosphoribosyl-AMP. The polypeptide is Phosphoribosyl-AMP cyclohydrolase (Geobacter metallireducens (strain ATCC 53774 / DSM 7210 / GS-15)).